A 190-amino-acid chain; its full sequence is Orotate phosphoribosyltransferase (190 aa).

114–122 (EDVVTTGGS) contributes to the 5-phospho-alpha-D-ribose 1-diphosphate binding site. 2 residues coordinate orotate: Thr-118 and Arg-146.

The protein belongs to the purine/pyrimidine phosphoribosyltransferase family. PyrE subfamily. As to quaternary structure, homodimer. The cofactor is Mg(2+).

It catalyses the reaction orotidine 5'-phosphate + diphosphate = orotate + 5-phospho-alpha-D-ribose 1-diphosphate. The protein operates within pyrimidine metabolism; UMP biosynthesis via de novo pathway; UMP from orotate: step 1/2. Its function is as follows. Catalyzes the transfer of a ribosyl phosphate group from 5-phosphoribose 1-diphosphate to orotate, leading to the formation of orotidine monophosphate (OMP). This is Orotate phosphoribosyltransferase from Caldanaerobacter subterraneus subsp. tengcongensis (strain DSM 15242 / JCM 11007 / NBRC 100824 / MB4) (Thermoanaerobacter tengcongensis).